A 765-amino-acid chain; its full sequence is 5-methyltetrahydropteroyltriglutamate--homocysteine methyltransferase 2 (765 aa).

Residues K18 and N116 each contribute to the 5-methyltetrahydropteroyltri-L-glutamate site. L-homocysteine is bound by residues 437–439 (IGS) and E490. L-methionine contacts are provided by residues 437–439 (IGS) and E490. Residues D495, Y518, 521–522 (RC), and W567 each bind 5-methyltetrahydropteroyltri-L-glutamate. D605 contributes to the L-homocysteine binding site. D605 lines the L-methionine pocket. Zn(2+) is bound by residues H647, C649, H658, D662, and E671. Residue H701 is the Proton donor of the active site. C733 lines the Zn(2+) pocket.

This sequence belongs to the vitamin-B12 independent methionine synthase family. Requires Zn(2+) as cofactor. In terms of tissue distribution, expressed in leaves, stems and siliques.

It is found in the cytoplasm. The protein localises to the cytosol. It catalyses the reaction 5-methyltetrahydropteroyltri-L-glutamate + L-homocysteine = tetrahydropteroyltri-L-glutamate + L-methionine. It participates in amino-acid biosynthesis; L-methionine biosynthesis via de novo pathway; L-methionine from L-homocysteine (MetE route): step 1/1. In terms of biological role, catalyzes the transfer of a methyl group from 5-methyltetrahydrofolate to homocysteine resulting in methionine formation. This is 5-methyltetrahydropteroyltriglutamate--homocysteine methyltransferase 2 (MS2) from Arabidopsis thaliana (Mouse-ear cress).